Here is a 279-residue protein sequence, read N- to C-terminus: Movement protein (279 aa).

A disordered region spans residues Ser255–Leu279. The segment covering Pro263–Leu279 has biased composition (polar residues).

This sequence belongs to the cucumovirus movement protein family.

Its subcellular location is the host cell junction. It localises to the host plasmodesma. Functionally, transports viral genome to neighboring plant cells directly through plasmosdesmata, without any budding. The movement protein allows efficient cell to cell propagation, by bypassing the host cell wall barrier. Acts by forming a tubular structure at the host plasmodesmata, enlarging it enough to allow free passage of virion capsids. This Cucumis sativus (Cucumber) protein is Movement protein.